Here is a 179-residue protein sequence, read N- to C-terminus: Large ribosomal subunit protein uL6 (179 aa).

It belongs to the universal ribosomal protein uL6 family. As to quaternary structure, part of the 50S ribosomal subunit.

This protein binds to the 23S rRNA, and is important in its secondary structure. It is located near the subunit interface in the base of the L7/L12 stalk, and near the tRNA binding site of the peptidyltransferase center. The chain is Large ribosomal subunit protein uL6 from Prochlorococcus marinus (strain MIT 9211).